A 131-amino-acid chain; its full sequence is Phosphoribosyl-AMP cyclohydrolase (131 aa).

Mg(2+) is bound at residue Asp74. Residue Cys75 participates in Zn(2+) binding. Positions 76 and 78 each coordinate Mg(2+). 2 residues coordinate Zn(2+): Cys91 and Cys98.

It belongs to the PRA-CH family. As to quaternary structure, homodimer. Requires Mg(2+) as cofactor. It depends on Zn(2+) as a cofactor.

The protein localises to the cytoplasm. The catalysed reaction is 1-(5-phospho-beta-D-ribosyl)-5'-AMP + H2O = 1-(5-phospho-beta-D-ribosyl)-5-[(5-phospho-beta-D-ribosylamino)methylideneamino]imidazole-4-carboxamide. Its pathway is amino-acid biosynthesis; L-histidine biosynthesis; L-histidine from 5-phospho-alpha-D-ribose 1-diphosphate: step 3/9. Functionally, catalyzes the hydrolysis of the adenine ring of phosphoribosyl-AMP. The sequence is that of Phosphoribosyl-AMP cyclohydrolase from Bradyrhizobium sp. (strain BTAi1 / ATCC BAA-1182).